We begin with the raw amino-acid sequence, 4015 residues long: Hybrid PKS-NRPS synthetase iccA (4015 aa).

The span at 1–12 (MAANDSNNQTKP) shows a compositional bias: polar residues. The segment at 1-20 (MAANDSNNQTKPQLPEEPVA) is disordered. The 430-residue stretch at 16-445 (EEPVAIVGSS…GTNAHVIIES (430 aa)) folds into the Ketosynthase family 3 (KS3) domain. Catalysis depends on for beta-ketoacyl synthase activity residues C190, H327, and H365. The malonyl-CoA:ACP transacylase (MAT) domain stretch occupies residues 560–885 (VFTGQGAQWP…LKRGASDVEA (326 aa)). Residues 954 to 1091 (HELLGRRTPD…GRLSVHLGEA (138 aa)) are N-terminal hotdog fold. Residues 954–1260 (HELLGRRTPD…TTKMVGEQDA (307 aa)) are dehydratase (DH) domain. A PKS/mFAS DH domain is found at 954–1261 (HELLGRRTPD…TKMVGEQDAS (308 aa)). Residue H986 is the Proton acceptor; for dehydratase activity of the active site. A C-terminal hotdog fold region spans residues 1106–1261 (LVNINTDRAY…TKMVGEQDAS (156 aa)). The Proton donor; for dehydratase activity role is filled by D1165. Positions 1400-1598 (KDDMLNRFYM…YSGADMVVHD (199 aa)) are methyltransferase (MT) domain. The tract at residues 2120-2261 (KTYLMVGAAG…STATTIGNIG (142 aa)) is ketoreductase (KR) domain. Residues 2379–2405 (STLQNDSSQTGGTGNGSSVRRQVEEAQ) form a disordered region. The Carrier 1 domain maps to 2409–2488 (EAVDAVLDGF…QICTTAAKKV (80 aa)). S2448 bears the O-(pantetheine 4'-phosphoryl)serine mark. The segment covering 2498 to 2515 (EDAVAEEGGREAASKKEP) has biased composition (basic and acidic residues). Disordered stretches follow at residues 2498-2529 (EDAVAEEGGREAASKKEPAPAASAPTPAPVAP) and 2545-2597 (TISE…VRDE). The span at 2553-2569 (SAFSNKGSSSSATGASS) shows a compositional bias: low complexity. The segment covering 2582–2597 (TSKDQSHVRPETVRDE) has biased composition (basic and acidic residues). Positions 2598–3029 (RMSPAQARIW…HVKLKDCVIH (432 aa)) are condensation (C) domain. The adenylation (A) (KR) domain stretch occupies residues 3063 to 3459 (LKSPKNAAIQ…GTLLCLGRLD (397 aa)). The tract at residues 3063 to 3459 (LKSPKNAAIQ…GTLLCLGRLD (397 aa)) is reductase (RED) domain. A Carrier 2 domain is found at 3572–3651 (EKMNIREGEL…EMALCVDEQR (80 aa)). Position 3611 is an O-(pantetheine 4'-phosphoryl)serine (S3611).

In the C-terminal section; belongs to the NRP synthetase family.

The enzyme catalyses L-tyrosine + holo-[ACP] + 7 malonyl-CoA + acetyl-CoA + 8 AH2 + 2 S-adenosyl-L-methionine + ATP + 4 H(+) = N-[(4E,6E,10S,12Z,14E)-6,10-dimethyl-3-oxohexadeca-4,6,12,14-tetraenoyl]-L-tyrosyl-[ACP] + 8 A + AMP + 2 S-adenosyl-L-homocysteine + 7 CO2 + diphosphate + 8 CoA + 6 H2O. The protein operates within mycotoxin biosynthesis. Hybrid PKS-NRPS synthetase; part of the gene cluster that mediates the biosynthesis of ilicicolin H, a 4-hydroxy-2-pyridonealkaloid that has potent and broad antifungal activities by inhibiting the mitochondrial respiration chain. IccA assembles the backbone of ilicicolin H. The PKS portion and trans-acting enoyl reductase iccB work together to construct an octaketide, and two methyl groups are introduced by the MT domain during the chain assembly. The nascent chain is then condensed with tyrosine, catalyzed by the C domain, and the resulting PKS-NRPS hybrid is offloaded by the RED domain to form an advanced tetramic acid intermediate. The biosynthesis of ilicicolin H starts with formation of the tetramic acid by the hybrid PKS-NRPS synthetase iccA with the partnering trans-enoyl reductase iccB since iccA lacks a designated enoylreductase (ER) domain. The cytochrome P450 monooxygenase iccC then catalyzes the ring expansion of the tetramate to the acyclic 2-pyridone. The pericyclase iccD further converts the acyclic 2-pyridone into 8-epi-ilicicolin H. Finally, the epimerase iccE converts 8-epi-ilicicolin H into ilicicolin H via epimerization. IccA to iccE are sufficient for ilicicolin H biosynthesis and the roles of the remaining enzymes, iccF, iccG and iccH within the pathway have still to be determined. The protein is Hybrid PKS-NRPS synthetase iccA of Talaromyces variabilis (Penicillium variabile).